The primary structure comprises 424 residues: Serine hydroxymethyltransferase 1 (424 aa).

(6S)-5,6,7,8-tetrahydrofolate is bound by residues Leu-125 and 129-131 (GHL). Lys-234 is modified (N6-(pyridoxal phosphate)lysine).

It belongs to the SHMT family. In terms of assembly, homodimer. Pyridoxal 5'-phosphate serves as cofactor.

Its subcellular location is the cytoplasm. The catalysed reaction is (6R)-5,10-methylene-5,6,7,8-tetrahydrofolate + glycine + H2O = (6S)-5,6,7,8-tetrahydrofolate + L-serine. It functions in the pathway one-carbon metabolism; tetrahydrofolate interconversion. Its pathway is amino-acid biosynthesis; glycine biosynthesis; glycine from L-serine: step 1/1. In terms of biological role, catalyzes the reversible interconversion of serine and glycine with tetrahydrofolate (THF) serving as the one-carbon carrier. This reaction serves as the major source of one-carbon groups required for the biosynthesis of purines, thymidylate, methionine, and other important biomolecules. Also exhibits THF-independent aldolase activity toward beta-hydroxyamino acids, producing glycine and aldehydes, via a retro-aldol mechanism. This Burkholderia lata (strain ATCC 17760 / DSM 23089 / LMG 22485 / NCIMB 9086 / R18194 / 383) protein is Serine hydroxymethyltransferase 1.